Reading from the N-terminus, the 114-residue chain is Iron-sulfur cluster insertion protein ErpA (114 aa).

Cysteine 42, cysteine 106, and cysteine 108 together coordinate iron-sulfur cluster.

Belongs to the HesB/IscA family. As to quaternary structure, homodimer. Iron-sulfur cluster is required as a cofactor.

Its function is as follows. Required for insertion of 4Fe-4S clusters for at least IspG. The protein is Iron-sulfur cluster insertion protein ErpA of Klebsiella pneumoniae subsp. pneumoniae (strain ATCC 700721 / MGH 78578).